Reading from the N-terminus, the 378-residue chain is Succinyl-diaminopimelate desuccinylase (378 aa).

Histidine 68 serves as a coordination point for Zn(2+). The active site involves aspartate 70. Position 101 (aspartate 101) interacts with Zn(2+). The active-site Proton acceptor is the glutamate 135. Zn(2+) contacts are provided by glutamate 136, glutamate 164, and histidine 350.

It belongs to the peptidase M20A family. DapE subfamily. In terms of assembly, homodimer. It depends on Zn(2+) as a cofactor. The cofactor is Co(2+).

The catalysed reaction is N-succinyl-(2S,6S)-2,6-diaminopimelate + H2O = (2S,6S)-2,6-diaminopimelate + succinate. It functions in the pathway amino-acid biosynthesis; L-lysine biosynthesis via DAP pathway; LL-2,6-diaminopimelate from (S)-tetrahydrodipicolinate (succinylase route): step 3/3. Catalyzes the hydrolysis of N-succinyl-L,L-diaminopimelic acid (SDAP), forming succinate and LL-2,6-diaminopimelate (DAP), an intermediate involved in the bacterial biosynthesis of lysine and meso-diaminopimelic acid, an essential component of bacterial cell walls. This is Succinyl-diaminopimelate desuccinylase from Acinetobacter baumannii (strain ACICU).